A 447-amino-acid polypeptide reads, in one-letter code: Argininosuccinate synthase (447 aa).

ATP-binding positions include 17 to 25 and Ala43; that span reads AFSGGLDTS. Tyr99 is an L-citrulline binding site. ATP is bound by residues Gly129 and Thr131. L-aspartate-binding residues include Thr131, Asn135, and Asp136. Position 135 (Asn135) interacts with L-citrulline. Residue Asp136 coordinates ATP. 2 residues coordinate L-citrulline: Arg139 and Ser192. Asp194 contributes to the ATP binding site. L-citrulline contacts are provided by Thr201, Glu203, and Glu280.

It belongs to the argininosuccinate synthase family. Type 2 subfamily. Homotetramer.

The protein resides in the cytoplasm. The enzyme catalyses L-citrulline + L-aspartate + ATP = 2-(N(omega)-L-arginino)succinate + AMP + diphosphate + H(+). The protein operates within amino-acid biosynthesis; L-arginine biosynthesis; L-arginine from L-ornithine and carbamoyl phosphate: step 2/3. In Escherichia coli O9:H4 (strain HS), this protein is Argininosuccinate synthase.